Consider the following 31-residue polypeptide: Cyclotide glopa C (31 aa).

A cross-link (cyclopeptide (Gly-Asn)) is located at residues 1-31 (GDLPICGETCFEGGNCRIPGCTCVWPFCSKN). Cystine bridges form between Cys6–Cys21, Cys10–Cys23, and Cys16–Cys28.

This is a cyclic peptide.

Functionally, probably participates in a plant defense mechanism. In Gloeospermum pauciflorum, this protein is Cyclotide glopa C.